A 1548-amino-acid polypeptide reads, in one-letter code: Dual oxidase 2 (1548 aa).

Positions 1 to 25 are cleaved as a signal peptide; the sequence is MLRARPEALMLLGALLTGSLGPSGN. Over 26–601 the chain is Extracellular; sequence QDALSLPWEV…EGSSPGFAIT (576 aa). A peroxidase-like; mediates peroxidase activity region spans residues 30 to 596; the sequence is SLPWEVQRYD…VLDFFEGSSP (567 aa). Asparagine 100, asparagine 348, asparagine 382, asparagine 455, and asparagine 537 each carry an N-linked (GlcNAc...) asparagine glycan. A disulfide bond links cysteine 124 and cysteine 1162. The helical transmembrane segment at 602-622 threads the bilayer; the sequence is IIALCCLPLVSLLLSGVVAYF. Residues 623 to 1041 lie on the Cytoplasmic side of the membrane; the sequence is RGREHKKLQK…KRFVENYRRH (419 aa). EF-hand domains follow at residues 819–854, 855–890, and 899–934; these read PQDM…FMKG, SPED…FIEI, and QLAE…HDSE. Residues aspartate 832, aspartate 834, asparagine 836, tyrosine 838, glutamate 843, aspartate 868, aspartate 870, asparagine 872, and glutamate 879 each contribute to the Ca(2+) site. Residues 960-1245 are interaction with TXNDC11; that stretch reads ISCRVSFITR…GSYALIQLPT (286 aa). Residues 971-991 are disordered; that stretch reads PGERSHPQGLGPPAPEAPELG. A helical transmembrane segment spans residues 1042–1062; the sequence is IVCVAIFSAICVGVFADRAYY. Residues 1063-1076 lie on the Extracellular side of the membrane; that stretch reads YGFASPPSDIAQTT. Residues 1077-1097 traverse the membrane as a helical segment; the sequence is LVGIILSRGTAASVSFMFSYI. A Ferric oxidoreductase domain is found at 1084–1266; it reads RGTAASVSFM…YGGDKLVSLS (183 aa). Over 1098–1128 the chain is Cytoplasmic; the sequence is LLTMCRNLITFLRETFLNRYVPFDAAVDFHR. A helical transmembrane segment spans residues 1129 to 1151; it reads WIAMAAVVLAILHSAGHAVNVYI. The Extracellular segment spans residues 1152–1185; sequence FSVSPLSLLACIFPNVFVNDGSKLPQKFYWWFFQ. The chain crosses the membrane as a helical span at residues 1186-1206; it reads TVPGMTGVLLLLVLAIMYVFA. Residues 1207-1223 lie on the Cytoplasmic side of the membrane; the sequence is SHHFRRRSFRGFWLTHH. A run of 2 helical transmembrane segments spans residues 1224–1244 and 1245–1265; these read LYIL…IQLP and TFHI…LVSL. Residues 1266-1548 are Cytoplasmic-facing; sequence SRKKVEISVV…AHFMHHYENF (283 aa). The FAD-binding FR-type domain maps to 1267–1373; that stretch reads RKKVEISVVK…DGPFGEGHQE (107 aa).

This sequence in the N-terminal section; belongs to the peroxidase family. Heterodimer with DUOXA2; disulfide-linked. Interacts with TXNDC11, TPO and CYBA. In terms of processing, N-glycosylated. As to expression, expressed in colon, small intestine, duodenum and tracheal surface epithelial cells (at protein level). Expressed in thyrocytes. Also detected in kidney, liver, lung, pancreas, prostate, salivary glands, rectum and testis.

It is found in the apical cell membrane. Its subcellular location is the cell junction. It catalyses the reaction NADH + O2 + H(+) = H2O2 + NAD(+). It carries out the reaction NADPH + O2 + H(+) = H2O2 + NADP(+). Its pathway is hormone biosynthesis; thyroid hormone biosynthesis. Peroxidase activity is inhibited by aminobenzohydrazide. The NADPH oxidase activity is calcium-dependent. Generates hydrogen peroxide which is required for the activity of thyroid peroxidase/TPO and lactoperoxidase/LPO. Plays a role in thyroid hormones synthesis and lactoperoxidase-mediated antimicrobial defense at the surface of mucosa. May have its own peroxidase activity through its N-terminal peroxidase-like domain. This Homo sapiens (Human) protein is Dual oxidase 2 (DUOX2).